A 236-amino-acid polypeptide reads, in one-letter code: 2-C-methyl-D-erythritol 4-phosphate cytidylyltransferase (236 aa).

This sequence belongs to the IspD/TarI cytidylyltransferase family. IspD subfamily.

It carries out the reaction 2-C-methyl-D-erythritol 4-phosphate + CTP + H(+) = 4-CDP-2-C-methyl-D-erythritol + diphosphate. It participates in isoprenoid biosynthesis; isopentenyl diphosphate biosynthesis via DXP pathway; isopentenyl diphosphate from 1-deoxy-D-xylulose 5-phosphate: step 2/6. Functionally, catalyzes the formation of 4-diphosphocytidyl-2-C-methyl-D-erythritol from CTP and 2-C-methyl-D-erythritol 4-phosphate (MEP). The chain is 2-C-methyl-D-erythritol 4-phosphate cytidylyltransferase from Pseudomonas syringae pv. tomato (strain ATCC BAA-871 / DC3000).